The primary structure comprises 397 residues: uncharacterized protein (397 aa).

9 helical membrane passes run 1 to 21 (MGAS…LMLV), 39 to 59 (VIQS…VVVF), 76 to 96 (EALS…FGVP), 103 to 123 (VLLF…FVGA), 124 to 144 (ALIE…LVMA), 194 to 214 (MMTP…LFAF), 219 to 239 (ALFG…FSLL), 255 to 275 (LVYL…KLML), and 301 to 321 (QSLT…FWSA).

It belongs to the TerC family.

It localises to the cell membrane. This is an uncharacterized protein from Mycobacterium tuberculosis (strain CDC 1551 / Oshkosh).